The following is a 313-amino-acid chain: MLANIIRIATRQSPLALWQARYVQQCLNHLYPDLHVELVPMVTRGDIILDTPLAKVGGKGLFVKELELALLEGRADIAVHSMKDVPVEFPDGLGLTTICERDDPRDAFVSNRYDSLEQLPEGSCVGTSSLRRQCQLRARRPDLVIRDLRGNVGTRLAKLDNGEYDAIILAVAGLKRLGLEERIRCALSPEESLPAVGQGAIGIECRLNDDRIRQLLAPLNHPATAARVQAERAMNVRLEGGCQVPIGSYAELEGDTLWLRALVGAPDGSQMIVGERRGNVSDAEQIGIALAEELLAKGASAILQAVYHESSSS.

The residue at position 242 (cysteine 242) is an S-(dipyrrolylmethanemethyl)cysteine.

It belongs to the HMBS family. As to quaternary structure, monomer. Requires dipyrromethane as cofactor.

The enzyme catalyses 4 porphobilinogen + H2O = hydroxymethylbilane + 4 NH4(+). The protein operates within porphyrin-containing compound metabolism; protoporphyrin-IX biosynthesis; coproporphyrinogen-III from 5-aminolevulinate: step 2/4. Its function is as follows. Tetrapolymerization of the monopyrrole PBG into the hydroxymethylbilane pre-uroporphyrinogen in several discrete steps. This chain is Porphobilinogen deaminase, found in Pectobacterium carotovorum subsp. carotovorum (strain PC1).